We begin with the raw amino-acid sequence, 81 residues long: Small cysteine-rich protein 1 2 (81 aa).

The first 19 residues, 1–19 (MGVNFNICLLLLLVATISS), serve as a signal peptide directing secretion. A propeptide spanning residues 20-39 (QPLKATEKDDSTDENPFGIY) is cleaved from the precursor.

Belongs to the Cnidaria small cysteine-rich protein (SCRiP) family. alpha subfamily. The basic myotoxic domain of rattlesnake crotamine toxins (with 6 Cys residues) has been detected in this protein. However, this protein contains 2 additional Cys at the C-terminal region. Hence, this protein may contain 4 disulfide bonds instead of the 3 suggested by the myotoxin domain.

The protein resides in the secreted. It is found in the nematocyst. Induces neurotoxic symptoms on zebrafish. Has also been claimed to be implied in calcification, but tests on homolog proteins suggest that proteins of this family have a neurotoxic function and not a calcification function. The chain is Small cysteine-rich protein 1 2 from Montipora capitata (Rice coral).